We begin with the raw amino-acid sequence, 217 residues long: Probable transaldolase (217 aa).

Lysine 83 acts as the Schiff-base intermediate with substrate in catalysis.

This sequence belongs to the transaldolase family. Type 3B subfamily.

It is found in the cytoplasm. The enzyme catalyses D-sedoheptulose 7-phosphate + D-glyceraldehyde 3-phosphate = D-erythrose 4-phosphate + beta-D-fructose 6-phosphate. The protein operates within carbohydrate degradation; pentose phosphate pathway; D-glyceraldehyde 3-phosphate and beta-D-fructose 6-phosphate from D-ribose 5-phosphate and D-xylulose 5-phosphate (non-oxidative stage): step 2/3. Functionally, transaldolase is important for the balance of metabolites in the pentose-phosphate pathway. The protein is Probable transaldolase of Paracoccus denitrificans (strain Pd 1222).